We begin with the raw amino-acid sequence, 174 residues long: MAQDIKNEEVEEVQEEEVVKTAEETTPEKSELDLANERADEFENKYLRAHAEMQNIQRRANEERQNLQRYRSQDLAKAILPSLDNLERALAVEGLTDDVKKGLGMVQESLIHALKEEGIEEIAADGEFDHNYHMAIQTLPADDEHPVDTIAQVFQKGYKLHDRILRPAMVVVYN.

A disordered region spans residues 1–35; that stretch reads MAQDIKNEEVEEVQEEEVVKTAEETTPEKSELDLA. Basic and acidic residues predominate over residues 17–35; it reads EVVKTAEETTPEKSELDLA.

This sequence belongs to the GrpE family. Homodimer.

The protein localises to the cytoplasm. In terms of biological role, participates actively in the response to hyperosmotic and heat shock by preventing the aggregation of stress-denatured proteins, in association with DnaK and GrpE. It is the nucleotide exchange factor for DnaK and may function as a thermosensor. Unfolded proteins bind initially to DnaJ; upon interaction with the DnaJ-bound protein, DnaK hydrolyzes its bound ATP, resulting in the formation of a stable complex. GrpE releases ADP from DnaK; ATP binding to DnaK triggers the release of the substrate protein, thus completing the reaction cycle. Several rounds of ATP-dependent interactions between DnaJ, DnaK and GrpE are required for fully efficient folding. The polypeptide is Protein GrpE (Streptococcus pneumoniae serotype 4 (strain ATCC BAA-334 / TIGR4)).